The chain runs to 304 residues: Non-specific ribonucleoside hydrolase RihC (304 aa).

His-233 is a catalytic residue.

Belongs to the IUNH family. RihC subfamily.

Functionally, hydrolyzes both purine and pyrimidine ribonucleosides with a broad-substrate specificity. The sequence is that of Non-specific ribonucleoside hydrolase RihC from Escherichia coli (strain SMS-3-5 / SECEC).